A 402-amino-acid polypeptide reads, in one-letter code: D-mannonate dehydratase (402 aa).

Residues Asn-37 and His-122 each contribute to the substrate site. The active-site Proton donor/acceptor is Tyr-159. Asp-210 contributes to the Mg(2+) binding site. The active-site Proton donor/acceptor is the His-212. Residues Glu-236 and Glu-262 each coordinate Mg(2+). Substrate-binding residues include Glu-262, Arg-283, His-312, Asp-316, and Glu-339.

Belongs to the mandelate racemase/muconate lactonizing enzyme family. GalD subfamily. It depends on Mg(2+) as a cofactor.

The enzyme catalyses D-mannonate = 2-dehydro-3-deoxy-D-gluconate + H2O. It participates in carbohydrate metabolism; pentose and glucuronate interconversion. Functionally, catalyzes the dehydration of D-mannonate. Has no detectable activity with a panel of 70 other acid sugars (in vitro). This chain is D-mannonate dehydratase, found in Rhizorhabdus wittichii (strain DSM 6014 / CCUG 31198 / JCM 15750 / NBRC 105917 / EY 4224 / RW1) (Sphingomonas wittichii).